An 88-amino-acid chain; its full sequence is UPF0297 protein SSU98_0066 (88 aa).

It belongs to the UPF0297 family.

In Streptococcus suis (strain 98HAH33), this protein is UPF0297 protein SSU98_0066.